A 359-amino-acid chain; its full sequence is Outer membrane protein assembly factor BamC (359 aa).

Positions 1 to 34 are cleaved as a signal peptide; the sequence is MASLFDKNSFQMTRLQKTAVAKVVGVSLIMLLAA. Residue Cys-35 is the site of N-palmitoyl cysteine attachment. Cys-35 carries the S-diacylglycerol cysteine lipid modification.

It belongs to the BamC family. In terms of assembly, part of the Bam complex, which is composed of the outer membrane protein BamA, and four lipoproteins BamB, BamC, BamD and BamE.

It localises to the cell outer membrane. Functionally, part of the outer membrane protein assembly complex, which is involved in assembly and insertion of beta-barrel proteins into the outer membrane. In Rahnella sp. (strain Y9602), this protein is Outer membrane protein assembly factor BamC.